A 305-amino-acid chain; its full sequence is MWVLINLLILMIMVLISVAFLTLLERKILGYIQDRKGPNKIMLFGMFQPFSDALKLLSKEWFFFNYSNLFIYSPMLMFFLSLVMWILYPWFGFMYYIEFSILFMLLVLGLSVYPVLFVGWISNCNYAILGSMRLVSTMISFEINLFFLVFSLMMMVESFSFNEFFFFQNNIKFAILLYPLYLMMFTSMLIELNRTPFDLIEGESELVSGFNIEYHSSMFVLIFLSEYMNIMFMSVILSLMFYGFKYWSIKFILIYLFHICLIIWIRGILPRIRYDKLMNMCWTEMLMLVMIYLMYLYFMKEFLCI.

The next 8 membrane-spanning stretches (helical) occupy residues 1-21 (MWVLINLLILMIMVLISVAFL), 75-95 (MLMFFLSLVMWILYPWFGFMY), 101-121 (ILFMLLVLGLSVYPVLFVGWI), 134-154 (LVSTMISFEINLFFLVFSLMM), 173-193 (FAILLYPLYLMMFTSMLIELN), 219-239 (FVLIFLSEYMNIMFMSVILSL), 249-269 (IKFILIYLFHICLIIWIRGIL), and 285-305 (MLMLVMIYLMYLYFMKEFLCI).

The protein belongs to the complex I subunit 1 family.

The protein localises to the mitochondrion inner membrane. The catalysed reaction is a ubiquinone + NADH + 5 H(+)(in) = a ubiquinol + NAD(+) + 4 H(+)(out). Core subunit of the mitochondrial membrane respiratory chain NADH dehydrogenase (Complex I) that is believed to belong to the minimal assembly required for catalysis. Complex I functions in the transfer of electrons from NADH to the respiratory chain. The immediate electron acceptor for the enzyme is believed to be ubiquinone. The chain is NADH-ubiquinone oxidoreductase chain 1 (ND1) from Apis mellifera ligustica (Common honeybee).